A 306-amino-acid chain; its full sequence is Probable GTP 3',8-cyclase (306 aa).

The region spanning 5–232 is the Radical SAM core domain; sequence RFGRPVTNLR…RRRKYFLPVD (228 aa). Arginine 14 contacts GTP. Residues cysteine 21 and cysteine 25 each coordinate [4Fe-4S] cluster. Residue tyrosine 27 participates in S-adenosyl-L-methionine binding. Position 28 (cysteine 28) interacts with [4Fe-4S] cluster. Position 61 (lysine 61) interacts with GTP. Glycine 65 contacts S-adenosyl-L-methionine. Position 90 (threonine 90) interacts with GTP. Serine 114 provides a ligand contact to S-adenosyl-L-methionine. Lysine 150 provides a ligand contact to GTP. An S-adenosyl-L-methionine-binding site is contributed by methionine 189. The [4Fe-4S] cluster site is built by cysteine 250 and cysteine 253. 255 to 257 contributes to the GTP binding site; sequence RLR. Position 267 (cysteine 267) interacts with [4Fe-4S] cluster.

It belongs to the radical SAM superfamily. MoaA family. Requires [4Fe-4S] cluster as cofactor.

The enzyme catalyses GTP + AH2 + S-adenosyl-L-methionine = (8S)-3',8-cyclo-7,8-dihydroguanosine 5'-triphosphate + 5'-deoxyadenosine + L-methionine + A + H(+). The protein operates within cofactor biosynthesis; molybdopterin biosynthesis. In terms of biological role, catalyzes the cyclization of GTP to (8S)-3',8-cyclo-7,8-dihydroguanosine 5'-triphosphate. This is Probable GTP 3',8-cyclase from Pyrococcus abyssi (strain GE5 / Orsay).